We begin with the raw amino-acid sequence, 429 residues long: UPF0597 protein BT_2080 (429 aa).

The protein belongs to the UPF0597 family.

The sequence is that of UPF0597 protein BT_2080 from Bacteroides thetaiotaomicron (strain ATCC 29148 / DSM 2079 / JCM 5827 / CCUG 10774 / NCTC 10582 / VPI-5482 / E50).